The primary structure comprises 105 residues: MGETEGKKEEADYKRLQTFPLVRHSDMPEEMRVETMELCVTACEKFSNNNESAAKMIKETMDKKFGSSWHVVIGEGFGFEITHEVKNLLYLYFGGTLAVCVWKCS.

This sequence belongs to the dynein light chain family. Consists of at least two heavy chains and a number of intermediate and light chains.

The protein resides in the cytoplasm. It localises to the cytoskeleton. Its subcellular location is the cilium axoneme. Its function is as follows. Force generating protein of respiratory cilia. Produces force towards the minus ends of microtubules. Dynein has ATPase activity. This is Dynein axonemal light chain 4 (Dnal4) from Mus musculus (Mouse).